The chain runs to 114 residues: Ribonuclease P protein component (114 aa).

It belongs to the RnpA family. Consists of a catalytic RNA component (M1 or rnpB) and a protein subunit.

The enzyme catalyses Endonucleolytic cleavage of RNA, removing 5'-extranucleotides from tRNA precursor.. RNaseP catalyzes the removal of the 5'-leader sequence from pre-tRNA to produce the mature 5'-terminus. It can also cleave other RNA substrates such as 4.5S RNA. The protein component plays an auxiliary but essential role in vivo by binding to the 5'-leader sequence and broadening the substrate specificity of the ribozyme. The chain is Ribonuclease P protein component from Buchnera aphidicola subsp. Baizongia pistaciae (strain Bp).